Reading from the N-terminus, the 581-residue chain is MMAPMTNWLTFSLSPMEMLRSSDQSQFVSYDASSAASSSPYLLDNFYGWSNQKPQEFFKEEAQLAAAASMADSTILTTFVDPQSHHSQNHIPKLEDFLGDSSSIVRYSDNSQTDTQDSSLTQIYDPRHHHNQTGFYSDHHDFKTMAGFQSAFSTNSGSEVDDSASIGRTHLAGDYLGHVVESSGPELGFHGGSTGALSLGVNVNNNTNHRNDNDNHYRGNNNGERINNNNNNDNEKTDSEKEKAVVAVETSDCSNKKIADTFGQRTSIYRGVTRHRWTGRYEAHLWDNSCRREGQARKGRQGGYDKEDKAARAYDLAALKYWNATATTNFPITNYSKEVEEMKHMTKQEFIASLRRKSSGFSRGASIYRGVTRHHQQGRWQARIGRVAGNKDLYLGTFATEEEAAEAYDIAAIKFRGINAVTNFEMNRYDVEAIMKSALPIGGAAKRLKLSLEAAASSEQKPILGHHQLHHFQQQQQQQQLQLQSSPNHSSINFALCPNSAVQSQQIIPCGIPFEAAALYHHHQQQQQHQQQQQQQNFFQHFPANAASDSTGSNNNSNVQGTMGLMAPNPAEFFLWPNQSY.

2 disordered regions span residues 105–132 (VRYSDNSQTDTQDSSLTQIYDPRHHHNQ) and 205–240 (NNTNHRNDNDNHYRGNNNGERINNNNNNDNEKTDSE). Low complexity-rich tracts occupy residues 108–122 (SDNSQTDTQDSSLTQ) and 218–232 (RGNNNGERINNNNNN). 2 DNA-binding regions (AP2/ERF) span residues 268-331 (IYRG…TNFP) and 367-425 (IYRG…TNFE).

It belongs to the AP2/ERF transcription factor family. AP2 subfamily. In terms of tissue distribution, expressed in roots, seedlings, hypocotyl, inflorescence, siliques, and pistils. Also detected at low levels in leaves.

Its subcellular location is the nucleus. In terms of biological role, probably acts as a transcriptional activator. Binds to the GCC-box pathogenesis-related promoter element. May be involved in the regulation of gene expression by stress factors and by components of stress signal transduction pathways. The protein is AP2-like ethylene-responsive transcription factor AIL6 of Arabidopsis thaliana (Mouse-ear cress).